Here is a 399-residue protein sequence, read N- to C-terminus: Succinate--CoA ligase [ADP-forming] subunit beta (399 aa).

Positions K9 to E254 constitute an ATP-grasp domain. ATP contacts are provided by residues K46, G53 to G55, A112, and E117. Mg(2+)-binding residues include N209 and D223. Substrate-binding positions include N274 and G331 to M333.

It belongs to the succinate/malate CoA ligase beta subunit family. As to quaternary structure, heterotetramer of two alpha and two beta subunits. It depends on Mg(2+) as a cofactor.

The catalysed reaction is succinate + ATP + CoA = succinyl-CoA + ADP + phosphate. The enzyme catalyses GTP + succinate + CoA = succinyl-CoA + GDP + phosphate. It participates in carbohydrate metabolism; tricarboxylic acid cycle; succinate from succinyl-CoA (ligase route): step 1/1. Its function is as follows. Succinyl-CoA synthetase functions in the citric acid cycle (TCA), coupling the hydrolysis of succinyl-CoA to the synthesis of either ATP or GTP and thus represents the only step of substrate-level phosphorylation in the TCA. The beta subunit provides nucleotide specificity of the enzyme and binds the substrate succinate, while the binding sites for coenzyme A and phosphate are found in the alpha subunit. The protein is Succinate--CoA ligase [ADP-forming] subunit beta of Rhizorhabdus wittichii (strain DSM 6014 / CCUG 31198 / JCM 15750 / NBRC 105917 / EY 4224 / RW1) (Sphingomonas wittichii).